Reading from the N-terminus, the 430-residue chain is Histidine--tRNA ligase (430 aa).

It belongs to the class-II aminoacyl-tRNA synthetase family. As to quaternary structure, homodimer.

The protein resides in the cytoplasm. It carries out the reaction tRNA(His) + L-histidine + ATP = L-histidyl-tRNA(His) + AMP + diphosphate + H(+). This is Histidine--tRNA ligase from Chlamydia felis (strain Fe/C-56) (Chlamydophila felis).